A 103-amino-acid chain; its full sequence is Large ribosomal subunit protein bL21 (103 aa).

Belongs to the bacterial ribosomal protein bL21 family. In terms of assembly, part of the 50S ribosomal subunit. Contacts protein L20.

Functionally, this protein binds to 23S rRNA in the presence of protein L20. The polypeptide is Large ribosomal subunit protein bL21 (Herminiimonas arsenicoxydans).